Consider the following 354-residue polypeptide: Uroporphyrinogen decarboxylase (354 aa).

Substrate is bound by residues arginine 27–arginine 31, phenylalanine 46, aspartate 77, tyrosine 154, threonine 209, and histidine 327.

The protein belongs to the uroporphyrinogen decarboxylase family. As to quaternary structure, homodimer.

The protein resides in the cytoplasm. It catalyses the reaction uroporphyrinogen III + 4 H(+) = coproporphyrinogen III + 4 CO2. Its pathway is porphyrin-containing compound metabolism; protoporphyrin-IX biosynthesis; coproporphyrinogen-III from 5-aminolevulinate: step 4/4. Catalyzes the decarboxylation of four acetate groups of uroporphyrinogen-III to yield coproporphyrinogen-III. This Salmonella typhi protein is Uroporphyrinogen decarboxylase.